The sequence spans 36 residues: Serine protease inhibitor 2 (36 aa).

The region spanning 1–36 (EISCEPGTTFQDKCNTCRCGKDGKSAAGCTLKACPQ) is the Pacifastin domain. 3 disulfides stabilise this stretch: Cys-4-Cys-19, Cys-14-Cys-34, and Cys-17-Cys-29.

Belongs to the protease inhibitor I19 family. Expressed in hemolymph.

The protein localises to the secreted. Probable serine protease inhibitor. This Melanoplus sanguinipes (Migratory grasshopper) protein is Serine protease inhibitor 2.